Consider the following 100-residue polypeptide: Urease subunit gamma (100 aa).

It belongs to the urease gamma subunit family. As to quaternary structure, heterotrimer of UreA (gamma), UreB (beta) and UreC (alpha) subunits. Three heterotrimers associate to form the active enzyme.

The protein localises to the cytoplasm. The enzyme catalyses urea + 2 H2O + H(+) = hydrogencarbonate + 2 NH4(+). Its pathway is nitrogen metabolism; urea degradation; CO(2) and NH(3) from urea (urease route): step 1/1. This is Urease subunit gamma from Ruegeria pomeroyi (strain ATCC 700808 / DSM 15171 / DSS-3) (Silicibacter pomeroyi).